Consider the following 1573-residue polypeptide: Pentafunctional AROM polypeptide (1573 aa).

The segment at 1-384 is 3-dehydroquinate synthase; the sequence is MSNESNIITV…YEKHATVVSD (384 aa). Residues 46 to 48, 83 to 86, 114 to 116, and D119 each bind NAD(+); these read DSN, ESSK, and GGV. Residue R130 coordinates 7-phospho-2-dehydro-3-deoxy-D-arabino-heptonate. 139–140 contributes to the NAD(+) binding site; it reads TT. Positions 146 and 152 each coordinate 7-phospho-2-dehydro-3-deoxy-D-arabino-heptonate. K161 serves as a coordination point for NAD(+). N162 serves as a coordination point for 7-phospho-2-dehydro-3-deoxy-D-arabino-heptonate. Residues 179–182 and N190 each bind NAD(+); that span reads FLHT. E194 contacts Zn(2+). 7-phospho-2-dehydro-3-deoxy-D-arabino-heptonate is bound by residues 194 to 197 and K250; that span reads EIIK. Catalysis depends on E260, which acts as the Proton acceptor; for 3-dehydroquinate synthase activity. 7-phospho-2-dehydro-3-deoxy-D-arabino-heptonate is bound by residues 264–268 and H271; that span reads RNLLN. H271 contributes to the Zn(2+) binding site. The active-site Proton acceptor; for 3-dehydroquinate synthase activity is H275. 7-phospho-2-dehydro-3-deoxy-D-arabino-heptonate contacts are provided by H287 and K356. H287 is a binding site for Zn(2+). Residues 397 to 843 form an EPSP synthase region; that stretch reads VDEFTKSSWD…WDVLHQSFGV (447 aa). C825 functions as the For EPSP synthase activity in the catalytic mechanism. Residues 863–1058 are shikimate kinase; it reads NASIILIGMR…KTKKRSTFLT (196 aa). 870 to 877 is an ATP binding site; that stretch reads GMRGAGKT. The 3-dehydroquinase stretch occupies residues 1059 to 1280; it reads LNYPRIEDAL…AAPGQLTVKQ (222 aa). Residue H1182 is the Proton acceptor; for 3-dehydroquinate dehydratase activity of the active site. K1211 functions as the Schiff-base intermediate with substrate; for 3-dehydroquinate dehydratase activity in the catalytic mechanism. Residues 1293 to 1573 form a shikimate dehydrogenase region; sequence PEKFFLFGKP…FDAVYQKVIE (281 aa).

The protein in the N-terminal section; belongs to the sugar phosphate cyclases superfamily. Dehydroquinate synthase family. In the 2nd section; belongs to the EPSP synthase family. It in the 3rd section; belongs to the shikimate kinase family. This sequence in the 4th section; belongs to the type-I 3-dehydroquinase family. The protein in the C-terminal section; belongs to the shikimate dehydrogenase family. As to quaternary structure, homodimer. Zn(2+) serves as cofactor.

The protein resides in the cytoplasm. It carries out the reaction 7-phospho-2-dehydro-3-deoxy-D-arabino-heptonate = 3-dehydroquinate + phosphate. The catalysed reaction is 3-dehydroquinate = 3-dehydroshikimate + H2O. It catalyses the reaction shikimate + NADP(+) = 3-dehydroshikimate + NADPH + H(+). The enzyme catalyses shikimate + ATP = 3-phosphoshikimate + ADP + H(+). It carries out the reaction 3-phosphoshikimate + phosphoenolpyruvate = 5-O-(1-carboxyvinyl)-3-phosphoshikimate + phosphate. It participates in metabolic intermediate biosynthesis; chorismate biosynthesis; chorismate from D-erythrose 4-phosphate and phosphoenolpyruvate: step 2/7. It functions in the pathway metabolic intermediate biosynthesis; chorismate biosynthesis; chorismate from D-erythrose 4-phosphate and phosphoenolpyruvate: step 3/7. Its pathway is metabolic intermediate biosynthesis; chorismate biosynthesis; chorismate from D-erythrose 4-phosphate and phosphoenolpyruvate: step 4/7. The protein operates within metabolic intermediate biosynthesis; chorismate biosynthesis; chorismate from D-erythrose 4-phosphate and phosphoenolpyruvate: step 5/7. It participates in metabolic intermediate biosynthesis; chorismate biosynthesis; chorismate from D-erythrose 4-phosphate and phosphoenolpyruvate: step 6/7. Its function is as follows. The AROM polypeptide catalyzes 5 consecutive enzymatic reactions in prechorismate polyaromatic amino acid biosynthesis. The protein is Pentafunctional AROM polypeptide of Schizosaccharomyces pombe (strain 972 / ATCC 24843) (Fission yeast).